A 793-amino-acid chain; its full sequence is Xaa-Pro dipeptidyl-peptidase (793 aa).

Residues Ser363, Asp483, and His514 each act as charge relay system in the active site.

It belongs to the peptidase S15 family. As to quaternary structure, homodimer.

It localises to the cytoplasm. It catalyses the reaction Hydrolyzes Xaa-Pro-|- bonds to release unblocked, N-terminal dipeptides from substrates including Ala-Pro-|-p-nitroanilide and (sequentially) Tyr-Pro-|-Phe-Pro-|-Gly-Pro-|-Ile.. Removes N-terminal dipeptides sequentially from polypeptides having unsubstituted N-termini provided that the penultimate residue is proline. The sequence is that of Xaa-Pro dipeptidyl-peptidase from Lactobacillus helveticus (strain DPC 4571).